We begin with the raw amino-acid sequence, 168 residues long: Chemoreceptor glutamine deamidase CheD (168 aa).

It belongs to the CheD family. Forms a complex with CheC.

The catalysed reaction is L-glutaminyl-[protein] + H2O = L-glutamyl-[protein] + NH4(+). Functionally, deamidates glutamine residues to glutamate on methyl-accepting chemotaxis receptors (MCPs). CheD-mediated MCP deamidation is required for productive communication of the conformational signals of the chemoreceptors to the CheA kinase. This Bacillus licheniformis (strain ATCC 14580 / DSM 13 / JCM 2505 / CCUG 7422 / NBRC 12200 / NCIMB 9375 / NCTC 10341 / NRRL NRS-1264 / Gibson 46) protein is Chemoreceptor glutamine deamidase CheD.